Consider the following 446-residue polypeptide: Coagulation factor VII (446 aa).

Positions 1-24 (MVPQAHGLLLLCFLLQLQGPLGTA) are cleaved as a signal peptide. Residues 25 to 41 (VFITQEEAHGVLHRQRR) constitute a propeptide that is removed on maturation. One can recognise a Gla domain in the interval 42–86 (ANSLLEELWPGSLERECNEEQCSFEEAREIFKSPERTKQFWIVYS). 4-carboxyglutamate occurs at positions 47, 48, 55, 57, 60, 61, 66, 67, 70, and 76. An intrachain disulfide couples Cys58 to Cys63. Positions 87-123 (DGDQCASNPCQNGGTCQDHLKSYVCFCLLDFEGRNCE) constitute an EGF-like 1; calcium-binding domain. 10 cysteine pairs are disulfide-bonded: Cys91–Cys102, Cys96–Cys111, Cys113–Cys122, Cys132–Cys143, Cys139–Cys153, Cys155–Cys168, Cys176–Cys303, Cys200–Cys205, Cys219–Cys235, and Cys351–Cys370. Ser93 carries an O-linked (Glc...) serine; alternate glycan. An O-linked (Xyl...) serine; alternate glycan is attached at Ser93. Residue Asp104 is modified to (3R)-3-hydroxyaspartate. The EGF-like 2 domain maps to 128–169 (EQLICANENGDCDQYCRDHVGTKRTCSCHEDYTLQPDEVSCK). N-linked (GlcNAc...) asparagine glycosylation is present at Asn186. Positions 194 to 433 (IVGGNVCPKG…YIDWLVRHMD (240 aa)) constitute a Peptidase S1 domain. His234 functions as the Charge relay system in the catalytic mechanism. N-linked (GlcNAc...) asparagine glycosylation is present at Asn244. Catalysis depends on Asp283, which acts as the Charge relay system. A substrate-binding site is contributed by Asp379. Cys381 and Cys409 are disulfide-bonded. Ser385 acts as the Charge relay system in catalysis.

This sequence belongs to the peptidase S1 family. As to quaternary structure, heterodimer of a light chain and a heavy chain linked by a disulfide bond. Post-translationally, the vitamin K-dependent, enzymatic carboxylation of some glutamate residues allows the modified protein to bind calcium. The iron and 2-oxoglutarate dependent 3-hydroxylation of aspartate and asparagine is (R) stereospecific within EGF domains. In terms of processing, can be either O-glucosylated or O-xylosylated at Ser-93 by POGLUT1. In terms of tissue distribution, plasma and liver.

Its subcellular location is the secreted. It carries out the reaction Selective cleavage of Arg-|-Ile bond in factor X to form factor Xa.. Its function is as follows. Initiates the extrinsic pathway of blood coagulation. Serine protease that circulates in the blood in a zymogen form. Factor VII is converted to factor VIIa by factor Xa, factor XIIa, factor IXa, or thrombin by minor proteolysis. In the presence of tissue factor and calcium ions, factor VIIa then converts factor X to factor Xa by limited proteolysis. Factor VIIa also converts factor IX to factor IXa in the presence of tissue factor and calcium. The sequence is that of Coagulation factor VII (F7) from Mus musculus (Mouse).